The primary structure comprises 320 residues: Cytochrome f (320 aa).

The first 35 residues, 1-35, serve as a signal peptide directing secretion; the sequence is MENRKTFSWLKEQMIRSISVSIMIYVITRTSISNA. Residues Tyr36, Cys56, Cys59, and His60 each contribute to the heme site. A helical membrane pass occupies residues 286-306; it reads VQGLLFFFASVILAQVFLVLK.

This sequence belongs to the cytochrome f family. The 4 large subunits of the cytochrome b6-f complex are cytochrome b6, subunit IV (17 kDa polypeptide, petD), cytochrome f and the Rieske protein, while the 4 small subunits are PetG, PetL, PetM and PetN. The complex functions as a dimer. Heme is required as a cofactor.

It is found in the plastid. The protein localises to the chloroplast thylakoid membrane. Component of the cytochrome b6-f complex, which mediates electron transfer between photosystem II (PSII) and photosystem I (PSI), cyclic electron flow around PSI, and state transitions. The chain is Cytochrome f from Saccharum hybrid (Sugarcane).